A 427-amino-acid chain; its full sequence is Dihydroorotase (427 aa).

Residues H58 and H60 each contribute to the Zn(2+) site. Residues 60–62 (HLR) and N92 each bind substrate. Zn(2+) is bound by residues D150, H177, and H230. N276 provides a ligand contact to substrate. D303 contacts Zn(2+). The active site involves D303. Substrate contacts are provided by residues H307 and 321–322 (FG).

It belongs to the metallo-dependent hydrolases superfamily. DHOase family. Class I DHOase subfamily. The cofactor is Zn(2+).

It catalyses the reaction (S)-dihydroorotate + H2O = N-carbamoyl-L-aspartate + H(+). Its pathway is pyrimidine metabolism; UMP biosynthesis via de novo pathway; (S)-dihydroorotate from bicarbonate: step 3/3. Its function is as follows. Catalyzes the reversible cyclization of carbamoyl aspartate to dihydroorotate. The sequence is that of Dihydroorotase from Macrococcus caseolyticus (strain JCSC5402) (Macrococcoides caseolyticum).